A 400-amino-acid polypeptide reads, in one-letter code: Tryptophan synthase beta chain (400 aa).

K90 is modified (N6-(pyridoxal phosphate)lysine).

The protein belongs to the TrpB family. In terms of assembly, tetramer of two alpha and two beta chains. Pyridoxal 5'-phosphate is required as a cofactor.

The enzyme catalyses (1S,2R)-1-C-(indol-3-yl)glycerol 3-phosphate + L-serine = D-glyceraldehyde 3-phosphate + L-tryptophan + H2O. The protein operates within amino-acid biosynthesis; L-tryptophan biosynthesis; L-tryptophan from chorismate: step 5/5. In terms of biological role, the beta subunit is responsible for the synthesis of L-tryptophan from indole and L-serine. The sequence is that of Tryptophan synthase beta chain from Bacillus velezensis (strain DSM 23117 / BGSC 10A6 / LMG 26770 / FZB42) (Bacillus amyloliquefaciens subsp. plantarum).